Consider the following 85-residue polypeptide: Large ribosomal subunit protein bL27 (85 aa).

The interval M1 to L21 is disordered. Residues A7–Q19 show a composition bias toward polar residues.

This sequence belongs to the bacterial ribosomal protein bL27 family.

This Beutenbergia cavernae (strain ATCC BAA-8 / DSM 12333 / CCUG 43141 / JCM 11478 / NBRC 16432 / NCIMB 13614 / HKI 0122) protein is Large ribosomal subunit protein bL27.